Here is a 998-residue protein sequence, read N- to C-terminus: SEC23-interacting protein (998 aa).

Residues Met1 to Glu363 form an interaction with SEC23A region. Residues Leu50 to Ala246 form a disordered region. Acidic residues predominate over residues Asp54 to Ser63. Residues Leu65 to Phe78 are compositionally biased toward polar residues. The span at Ser79–Ser88 shows a compositional bias: low complexity. Composition is skewed to polar residues over residues Ile94–Gln108, Pro143–Ser158, and Ala232–Val241. Ser600 carries the phosphoserine modification. The SAM domain maps to Glu640–Leu703. Residues Thr720–Glu742 are disordered. The span at Gly722–Glu732 shows a compositional bias: basic and acidic residues. Ser735, Ser748, and Ser924 each carry phosphoserine. The region spanning Leu777–Arg987 is the DDHD domain.

Belongs to the PA-PLA1 family. As to quaternary structure, interacts with SEC23A.

The protein localises to the cytoplasmic vesicle. The protein resides in the COPII-coated vesicle membrane. Its subcellular location is the endoplasmic reticulum. In terms of biological role, plays a role in the organization of endoplasmic reticulum exit sites. Specifically binds to phosphatidylinositol 3-phosphate (PI(3)P), phosphatidylinositol 4-phosphate (PI(4)P) and phosphatidylinositol 5-phosphate (PI(5)P). This Mus musculus (Mouse) protein is SEC23-interacting protein (Sec23ip).